The chain runs to 179 residues: Transcriptional repressor NrdR (179 aa).

The segment at 3 to 34 (CPYCQHTNSRVLESRSSEGGQSIRRRRECLCC) is a zinc-finger region. The ATP-cone domain occupies 49 to 139 (ITVIKHDGKK…VYGRFQGIKD (91 aa)). The interval 160–179 (KPANDDFSEQETPSTVMMPS) is disordered. Positions 169 to 179 (QETPSTVMMPS) are enriched in polar residues.

Belongs to the NrdR family. Requires Zn(2+) as cofactor.

Functionally, negatively regulates transcription of bacterial ribonucleotide reductase nrd genes and operons by binding to NrdR-boxes. This Rippkaea orientalis (strain PCC 8801 / RF-1) (Cyanothece sp. (strain PCC 8801)) protein is Transcriptional repressor NrdR.